A 210-amino-acid polypeptide reads, in one-letter code: Putative RING-H2 finger protein ATL50 (210 aa).

A helical membrane pass occupies residues 35 to 55 (IVLLYITLLSIIFFVAALIHL). The segment at 122–164 (CAVCLREFTAEDELRLLPKCSHAFHVECIDTWLLTNSTCPLCR) adopts an RING-type; atypical zinc-finger fold. A disordered region spans residues 187 to 210 (SDGDNSQDSDSSFMLTDLDDVESK).

It belongs to the RING-type zinc finger family. ATL subfamily.

The protein localises to the membrane. It catalyses the reaction S-ubiquitinyl-[E2 ubiquitin-conjugating enzyme]-L-cysteine + [acceptor protein]-L-lysine = [E2 ubiquitin-conjugating enzyme]-L-cysteine + N(6)-ubiquitinyl-[acceptor protein]-L-lysine.. It participates in protein modification; protein ubiquitination. This is Putative RING-H2 finger protein ATL50 (ATL50) from Arabidopsis thaliana (Mouse-ear cress).